The primary structure comprises 381 residues: E3 ubiquitin-protein ligase RNF34 (381 aa).

An FYVE-type zinc finger spans residues 56-107 (EGPNIVCKACGLSFSVFRKKHVCCDCKKDFCSLCSVSQENLRRCSTCHLLQE). In terms of domain architecture, SAP 1 spans 115-134 (LMRLKVKDLRQYLLLRNVPT). Ser-169 carries the post-translational modification Phosphoserine. The tract at residues 216–261 (LASANTDDEDGEEDDDDDDDDDDEDDDEQEENLEEQNPGLSKKKAR) is disordered. Positions 221–249 (TDDEDGEEDDDDDDDDDDEDDDEQEENLE) are enriched in acidic residues. Residues Ser-263 and Ser-265 each carry the phosphoserine modification. The 15-residue stretch at 273 to 287 (VEGMSVRQLKEILAR) folds into the SAP 2 domain. The RING-type zinc-finger motif lies at 334–369 (CRICMDAVIDCVLLECGHMVTCTKCGKRMSECPICR).

As to quaternary structure, interacts with CASP8 and CASP10. Interacts with p53/TP53; involved in p53/TP53 ubiquitination. Interacts (via RING-type zinc finger) with MDM2; the interaction stabilizes MDM2. Interacts (via RING-type zinc finger) with PPARGC1A. Interacts with NOD1. Post-translationally, proteolytically cleaved by caspases upon induction of apoptosis by TNF. Autoubiquitinated (in vitro). As to expression, ubiquitous. Detected in brain, cerebellum, midbrain, hippocampus, striatum, heart, lung, kidney, muscle, spleen and testis.

It localises to the cell membrane. It is found in the endomembrane system. The protein resides in the nucleus. The protein localises to the nucleus speckle. Its subcellular location is the cytoplasm. It localises to the cytosol. It carries out the reaction S-ubiquitinyl-[E2 ubiquitin-conjugating enzyme]-L-cysteine + [acceptor protein]-L-lysine = [E2 ubiquitin-conjugating enzyme]-L-cysteine + N(6)-ubiquitinyl-[acceptor protein]-L-lysine.. It participates in protein modification; protein ubiquitination. E3 ubiquitin-protein ligase that regulates several biological processes through the ubiquitin-mediated proteasomal degradation of various target proteins. Ubiquitinates the caspases CASP8 and CASP10, promoting their proteasomal degradation, to negatively regulate cell death downstream of death domain receptors in the extrinsic pathway of apoptosis. May mediate 'Lys-48'-linked polyubiquitination of RIPK1 and its subsequent proteasomal degradation thereby indirectly regulating the tumor necrosis factor-mediated signaling pathway. Negatively regulates p53/TP53 through its direct ubiquitination and targeting to proteasomal degradation. Indirectly, may also negatively regulate p53/TP53 through ubiquitination and degradation of SFN. Mediates PPARGC1A proteasomal degradation probably through ubiquitination thereby indirectly regulating the metabolism of brown fat cells. Possibly involved in innate immunity, through 'Lys-48'-linked polyubiquitination of NOD1 and its subsequent proteasomal degradation. This is E3 ubiquitin-protein ligase RNF34 from Rattus norvegicus (Rat).